The sequence spans 390 residues: Chalcone synthase (390 aa).

The active site involves C164.

The protein belongs to the thiolase-like superfamily. Chalcone/stilbene synthases family.

It carries out the reaction (E)-4-coumaroyl-CoA + 3 malonyl-CoA + 3 H(+) = 2',4,4',6'-tetrahydroxychalcone + 3 CO2 + 4 CoA. It participates in secondary metabolite biosynthesis; flavonoid biosynthesis. The primary product of this enzyme is 4,2',4',6'-tetrahydroxychalcone (also termed naringenin-chalcone or chalcone) which can under specific conditions spontaneously isomerize into naringenin. The sequence is that of Chalcone synthase (CHS) from Antirrhinum majus (Garden snapdragon).